Consider the following 256-residue polypeptide: Zinc import ATP-binding protein ZnuC 1 (256 aa).

In terms of domain architecture, ABC transporter spans 5–220; sequence LTLQDVCVVF…PKYIALFGQQ (216 aa). 37 to 44 is a binding site for ATP; it reads GPNGAGKS. The interval 232–256 is disordered; the sequence is HHHNHDLSGEPSDGSCCSKNKKAHQ.

The protein belongs to the ABC transporter superfamily. Zinc importer (TC 3.A.1.15.5) family. As to quaternary structure, the complex is composed of two ATP-binding proteins (ZnuC), two transmembrane proteins (ZnuB) and a solute-binding protein (ZnuA).

The protein localises to the cell inner membrane. The catalysed reaction is Zn(2+)(out) + ATP(in) + H2O(in) = Zn(2+)(in) + ADP(in) + phosphate(in) + H(+)(in). In terms of biological role, part of the ABC transporter complex ZnuABC involved in zinc import. Responsible for energy coupling to the transport system. In Aliivibrio fischeri (strain ATCC 700601 / ES114) (Vibrio fischeri), this protein is Zinc import ATP-binding protein ZnuC 1.